The chain runs to 402 residues: Myb-related protein 1 (402 aa).

Residues 42-102 (TDAKPRLKWT…HLQKYRLSKN (61 aa)) form the HTH myb-type domain. Positions 73–98 (PKTIMKVMGIPGLTLYHLKSHLQKYR) form a DNA-binding region, H-T-H motif. Positions 148–168 (SDALQMQIEVQRRLHEQLEVQ) form a coiled coil. The LHEQLE motif lies at 161 to 166 (LHEQLE). Over residues 238-260 (QQMQKTYPPNSSLDSCLTSSEGT) the composition is skewed to polar residues. Disordered regions lie at residues 238-266 (QQMQ…APKM), 344-363 (EHRG…FNEN), and 382-402 (HDEN…FSWN).

This sequence belongs to the MYB-CC family. In terms of assembly, isoforms 1 and 2: homodimer. Isoform 3: loss of dimerization. As to expression, expressed in phloem and/or cambium.

It is found in the nucleus. In terms of biological role, transcription factor that may act on the GAL1 promoter. Acts redundantly with MYR2 as a repressor of flowering and organ elongation under decreased light intensity. Represses gibberellic acid (GA)-dependent responses and affects levels of bioactive GA. The chain is Myb-related protein 1 from Arabidopsis thaliana (Mouse-ear cress).